The chain runs to 421 residues: Bone morphogenetic protein 10 (421 aa).

A signal peptide spans 1–21; sequence MGSLVLPLSAVFCLVAHSASG. Residues 22–313 constitute a propeptide that is removed on maturation; it reads SPIMGLEQSP…IDDSSARIRR (292 aa). N-linked (GlcNAc...) asparagine glycans are attached at residues N67 and N131. 3 disulfides stabilise this stretch: C320–C386, C349–C418, and C353–C420.

The protein belongs to the TGF-beta family. Homodimer; disulfide-linked. Interacts with FBN1 (via N-terminal domain) and FBN2. Interacts with ENG. As to expression, in the embryo, expressed exclusively in the ventricular trabecular myocardium of the developing heart from 9.0 dpc-13.5 dpc. By 16.5 dpc-18.5 dpc, only detectable in atria. Highly expressed in the adult heart where it is found in the right atrium but not in the left atrium. Lower levels in adult liver and lung.

It is found in the secreted. Functionally, required for maintaining the proliferative activity of embryonic cardiomyocytes by preventing premature activation of the negative cell cycle regulator CDKN1C/p57KIP and maintaining the required expression levels of cardiogenic factors such as MEF2C and NKX2-5. Acts as a ligand for ACVRL1/ALK1, BMPR1A/ALK3 and BMPR1B/ALK6, leading to activation of SMAD1, SMAD5 and SMAD8 transcription factors. Inhibits endothelial cell migration and growth. May reduce cell migration and cell matrix adhesion in breast cancer cell lines. The sequence is that of Bone morphogenetic protein 10 (Bmp10) from Mus musculus (Mouse).